A 374-amino-acid chain; its full sequence is Peptide chain release factor 2 (374 aa).

At Gln249 the chain carries N5-methylglutamine.

This sequence belongs to the prokaryotic/mitochondrial release factor family. Methylated by PrmC. Methylation increases the termination efficiency of RF2.

It localises to the cytoplasm. Peptide chain release factor 2 directs the termination of translation in response to the peptide chain termination codons UGA and UAA. The sequence is that of Peptide chain release factor 2 from Ruegeria sp. (strain TM1040) (Silicibacter sp.).